The chain runs to 318 residues: Aldo-keto reductase family 1 member C21 (318 aa).

20–24 (GFGTA) is a binding site for NADP(+). Lysine 31 is a substrate binding site. Aspartate 50 lines the NADP(+) pocket. Tyrosine 55 serves as the catalytic Proton donor. Histidine 117 is a binding site for substrate. Residues 166-167 (SN), glutamine 190, 216-224 (YGVLGTQRY), and 270-280 (TSLKEERIKEN) contribute to the NADP(+) site.

The protein belongs to the aldo/keto reductase family. Monomer.

It localises to the cytoplasm. The catalysed reaction is androsterone + NADP(+) = 5alpha-androstan-3,17-dione + NADPH + H(+). It carries out the reaction androsterone + NAD(+) = 5alpha-androstan-3,17-dione + NADH + H(+). In terms of biological role, NADP-dependent 17-alpha-hydroxysteroid dehydrogenase that converts 5-alpha-androstane-3,17-dione into androsterone. Has lower 3-alpha-hydroxysteroid dehydrogenase activity. Has broad substrate specificity and acts on various 17-alpha-hydroxysteroids, 17-ketosteroids, 3-alpha hydroxysteroids and 3-ketosteroids. Reduction of keto groups is strictly stereoselective. Reduction of 17-ketosteroids yields only 17-alpha-hydroxysteroids. Likewise, reduction of 3-ketosteroids yields only 3-alpha-hydroxysteroids. The sequence is that of Aldo-keto reductase family 1 member C21 (Akr1c21) from Rattus norvegicus (Rat).